The sequence spans 178 residues: MSRVAKRPILIPEGIKIELNLQSISIKGKYGYLSRIIHDAVKVECLNNKITFSIRSGFSDAWAQAGTSRALVNSMIIGVSKKFSKKLQFSGVGYRVSLTKGNIVNMSLGYSHPIVYSLPPYIEAENPSPTEIVIKGVDKQLVGQIAANLRSYRRPEPYKGKGIRYSNEVVHMKEAKKK.

This sequence belongs to the universal ribosomal protein uL6 family. Part of the 50S ribosomal subunit.

Its function is as follows. This protein binds to the 23S rRNA, and is important in its secondary structure. It is located near the subunit interface in the base of the L7/L12 stalk, and near the tRNA binding site of the peptidyltransferase center. The sequence is that of Large ribosomal subunit protein uL6 from Buchnera aphidicola subsp. Schizaphis graminum (strain Sg).